A 96-amino-acid polypeptide reads, in one-letter code: Small ribosomal subunit protein bS21 (96 aa).

Over residues 37–52 the composition is skewed to basic and acidic residues; the sequence is EKPSEKKAREKAEAVR. Positions 37–96 are disordered; sequence EKPSEKKAREKAEAVRRARKLARKKLQREGLLPSKPKPVFGADRGRGAAGGAGGAPRPAR. The span at 53–62 shows a compositional bias: basic residues; the sequence is RARKLARKKL.

This sequence belongs to the bacterial ribosomal protein bS21 family.

The chain is Small ribosomal subunit protein bS21 from Afipia carboxidovorans (strain ATCC 49405 / DSM 1227 / KCTC 32145 / OM5) (Oligotropha carboxidovorans).